Consider the following 148-residue polypeptide: Receptor activity-modifying protein 1 (148 aa).

The signal sequence occupies residues 1–26; it reads MARALCRLPRRGLWLLLAHHLFMTTA. 3 disulfides stabilise this stretch: C27/C82, C40/C72, and C57/C104. Residues 27–118 lie on the Extracellular side of the membrane; sequence CQEANYGALL…RAVRDPPGSI (92 aa). The helical transmembrane segment at 119 to 140 threads the bilayer; that stretch reads LYPFIVVPITVTLLVTALVVWQ. Residues 141 to 148 lie on the Cytoplasmic side of the membrane; it reads SKRTEGIV.

The protein belongs to the RAMP family. In terms of assembly, heterodimer of CALCRL and RAMP1; the interaction induces allosteric modulation of CALCRL function and CGRP1/CALCA and CGRP2/CALCB ligand specificity. Heterodimer of CALCR and RAMP1; interaction forms the AMYR1 receptor complex for amylin/IAPP and CGRP1/CALCA ligands. Expressed in many tissues including the uterus, bladder, brain, pancreas and gastro-intestinal tract.

Its subcellular location is the cell membrane. Accessory protein that interacts with and modulates the function of G-protein coupled receptors including calcitonin gene-related peptide type 1 receptor (CALCRL) and calcitonin receptor (CALCR). Required for the transport of CALCRL to the plasma membrane. Together with CALCRL, form the receptor complex for the calcitonin gene-related peptides CGRP1/CALCA and CGRP2/CALCB. Together with CALCR, form the AMYR1 receptor complex for amylin/IAPP and CGRP1/CALCA. In Homo sapiens (Human), this protein is Receptor activity-modifying protein 1.